The primary structure comprises 1588 residues: Ubiquitin carboxyl-terminal hydrolase 54 (1588 aa).

At Arg12 the chain carries Omega-N-methylarginine. One can recognise a USP domain in the interval 31–352; it reads KGLSNEPGQN…QPLLLLYADP (322 aa). Cys42 functions as the Nucleophile in the catalytic mechanism. Zn(2+) contacts are provided by His67, Cys69, Cys74, Cys77, His133, Cys145, Cys150, His153, Cys166, Cys169, Cys225, and Cys229. Residue His302 is the Proton acceptor of the active site. Composition is skewed to basic and acidic residues over residues 380 to 391 and 424 to 434; these read DSGHLTDSECNQ and SEGETLKEKQA. 2 disordered regions span residues 380–447 and 459–519; these read DSGH…TSRL and HSRP…PTWR. Position 424 is a phosphoserine (Ser424). 2 stretches are compositionally biased toward polar residues: residues 436-445 and 459-471; these read RNASKSSSTS and HSRP…TNAA. Low complexity predominate over residues 499-512; the sequence is TESTSSEARSSSSS. Residues Ser574, Ser613, and Ser616 each carry the phosphoserine modification. Residues 601-616 show a composition bias toward low complexity; it reads ESGYESSERNSSSPVS. A disordered region spans residues 601-620; the sequence is ESGYESSERNSSSPVSLDAA. Positions 678–712 form a coiled coil; the sequence is TSKSELDELQEEVARRAQEQELRKKREKELEAAKG. 5 disordered regions span residues 801-839, 856-895, 950-969, 1093-1172, and 1525-1562; these read RSLQ…EQSV, DSEL…SPPG, EDNS…TTQD, TRDV…SRRR, and GSVL…SAGE. Over residues 808 to 825 the composition is skewed to low complexity; the sequence is QQQPPSQQPVQPSASLPS. Residues 878-895 are compositionally biased toward polar residues; sequence SLVSPSPAQSVSQHSPPG. Ser1138 is modified (phosphoserine). A compositionally biased stretch (basic and acidic residues) spans 1536–1547; sequence RRIDVPPDDDGR.

This sequence belongs to the peptidase C19 family.

The catalysed reaction is Thiol-dependent hydrolysis of ester, thioester, amide, peptide and isopeptide bonds formed by the C-terminal Gly of ubiquitin (a 76-residue protein attached to proteins as an intracellular targeting signal).. Functionally, deubiquitinase that specifically mediates 'Lys-63'-linked deubiquitination of substrates with a polyubiquitin chain composed of at least 3 ubiquitins. Specifically recognizes ubiquitin chain in position S2 and catalyzes cleavage of polyubiquitin within 'Lys-63'-linked chains. Not able to deubiquitinate substrates with shorter ubiquitin chains. Mediates deubiquitination of PLK4, maintaining PLK4 stability by reducing its ubiquitination-mediated degradation. The sequence is that of Ubiquitin carboxyl-terminal hydrolase 54 (Usp54) from Rattus norvegicus (Rat).